We begin with the raw amino-acid sequence, 1827 residues long: Laminin subunit beta-4 (1827 aa).

Residues 1 to 21 form the signal peptide; that stretch reads MLLRLELSALLLLLIAAPVRL. Positions 26–266 constitute a Laminin N-terminal domain; sequence VGNSCYPNLG…ALYEMVVRGS (241 aa). N-linked (GlcNAc...) asparagine glycosylation is present at N231. 19 cysteine pairs are disulfide-bonded: C267-C276, C269-C297, C299-C308, C311-C331, C334-C343, C336-C361, C364-C373, C376-C394, C397-C410, C399-C417, C419-C428, C431-C446, C449-C463, C451-C470, C472-C481, C484-C498, C501-C513, C503-C520, and C522-C531. 4 Laminin EGF-like domains span residues 267-333, 334-396, 397-448, and 449-500; these read CFCN…VCKR, CNCH…ACIP, CDCD…GCQL, and CRCN…GCIP. A Laminin EGF-like 5; truncated domain is found at 501 to 544; the sequence is CDCDIGGALKTECSSVDGQCKCRPNMVGQKCNDPAPGYFLAPLD. The region spanning 540–847 is the Laminin IV type B domain; that stretch reads LAPLDFYIYE…LIGSMSAFIH (308 aa). Cystine bridges form between C853/C865, C855/C872, C874/C883, C886/C898, C901/C913, C903/C920, C922/C931, C934/C944, C947/C956, C949/C963, C966/C975, C978/C992, C995/C1011, C997/C1022, C1024/C1033, C1036/C1051, C1054/C1068, C1056/C1075, C1078/C1087, C1090/C1103, C1106/C1126, C1108/C1133, C1135/C1144, C1147/C1160, C1163/C1175, C1165/C1182, C1184/C1193, C1196/C1208, C1211/C1223, C1213/C1230, C1232/C1241, and C1244/C1255. Laminin EGF-like domains lie at 853–900, 901–946, 947–994, 995–1053, 1054–1105, 1106–1162, 1163–1210, and 1211–1257; these read CNCH…GCSP, CDCD…LCRR, CQCN…PCEP, CLCP…RCKE, CCCN…DCKE, CSCD…GCQP, CNCN…QCMF, and CDCN…ACEP. A glycan (N-linked (GlcNAc...) asparagine) is linked at N1001. Positions 1258–1449 are domain II; that stretch reads CHACNHLWEK…LSAANINEEV (192 aa). 2 coiled-coil regions span residues 1294 to 1335 and 1385 to 1449; these read ELQH…EIID and NKIK…NEEV. N1329 carries N-linked (GlcNAc...) asparagine glycosylation. The tract at residues 1450–1476 is domain alpha; sequence CGAPGDAECEKAKCGGALCGKCGGPDC. A domain I region spans residues 1477-1827; that stretch reads TGSLPISLNA…KVQRYNLCSP (351 aa). N1485, N1496, N1513, N1533, N1599, N1629, N1644, N1672, N1686, N1702, N1726, N1745, N1750, and N1761 each carry an N-linked (GlcNAc...) asparagine glycan. Coiled coils occupy residues 1485–1554 and 1584–1820; these read NASK…EKVK and DEIK…DKVQ.

As to quaternary structure, laminin is a complex glycoprotein, consisting of three different polypeptide chains (alpha, beta, gamma), which are bound to each other by disulfide bonds into a cross-shaped molecule comprising one long and three short arms with globules at each end.

It localises to the secreted. The protein resides in the extracellular space. It is found in the extracellular matrix. The protein localises to the basement membrane. In terms of biological role, binding to cells via a high affinity receptor, laminin is thought to mediate the attachment, migration and organization of cells into tissues during embryonic development by interacting with other extracellular matrix components. Positively regulates apical-basal distribution of Muller glia cells in the retina. The polypeptide is Laminin subunit beta-4 (lamb4) (Danio rerio (Zebrafish)).